The following is a 237-amino-acid chain: Sugar fermentation stimulation protein homolog (237 aa).

Belongs to the SfsA family.

The protein is Sugar fermentation stimulation protein homolog of Pseudomonas fluorescens (strain ATCC BAA-477 / NRRL B-23932 / Pf-5).